Here is a 240-residue protein sequence, read N- to C-terminus: Probable transcriptional regulatory protein VFMJ11_A0186 (240 aa).

Belongs to the TACO1 family.

The protein resides in the cytoplasm. The chain is Probable transcriptional regulatory protein VFMJ11_A0186 from Aliivibrio fischeri (strain MJ11) (Vibrio fischeri).